A 389-amino-acid polypeptide reads, in one-letter code: GTPase Obg (389 aa).

One can recognise an Obg domain in the interval Met-1–Leu-159. The region spanning Ala-160–Lys-333 is the OBG-type G domain. GTP is bound by residues Gly-166–Ser-173, Phe-191–Val-195, Asp-213–Gly-216, Asn-283–Asp-286, and Ala-314–Ile-316. Mg(2+)-binding residues include Ser-173 and Thr-193. The segment at Gln-362–Arg-389 is disordered. A compositionally biased stretch (acidic residues) spans Glu-364–Val-383.

It belongs to the TRAFAC class OBG-HflX-like GTPase superfamily. OBG GTPase family. Monomer. Mg(2+) serves as cofactor.

It is found in the cytoplasm. In terms of biological role, an essential GTPase which binds GTP, GDP and possibly (p)ppGpp with moderate affinity, with high nucleotide exchange rates and a fairly low GTP hydrolysis rate. Plays a role in control of the cell cycle, stress response, ribosome biogenesis and in those bacteria that undergo differentiation, in morphogenesis control. The chain is GTPase Obg from Proteus mirabilis (strain HI4320).